The following is a 224-amino-acid chain: Urease accessory protein UreF (224 aa).

Belongs to the UreF family. UreD, UreF and UreG form a complex that acts as a GTP-hydrolysis-dependent molecular chaperone, activating the urease apoprotein by helping to assemble the nickel containing metallocenter of UreC. The UreE protein probably delivers the nickel.

Its subcellular location is the cytoplasm. Required for maturation of urease via the functional incorporation of the urease nickel metallocenter. This is Urease accessory protein UreF from Ectopseudomonas mendocina (strain ymp) (Pseudomonas mendocina).